Reading from the N-terminus, the 256-residue chain is Ribosomal RNA large subunit methyltransferase E (256 aa).

S-adenosyl-L-methionine contacts are provided by Gly-50, Trp-52, Asp-69, Asp-85, and Asp-108. Residue Lys-148 is the Proton acceptor of the active site. Residues 195–253 enclose the TRAM domain; that stretch reads SLRKGDVVDVTIDAMGKTGDGIAHVDDFVVFVKGGSVGDKLKIKITDVKPSFAFADIVE.

It belongs to the class I-like SAM-binding methyltransferase superfamily. RNA methyltransferase RlmE family.

The protein resides in the cytoplasm. The catalysed reaction is uridine(2552) in 23S rRNA + S-adenosyl-L-methionine = 2'-O-methyluridine(2552) in 23S rRNA + S-adenosyl-L-homocysteine + H(+). In terms of biological role, specifically methylates the uridine in position 2552 of 23S rRNA at the 2'-O position of the ribose in the fully assembled 50S ribosomal subunit. The sequence is that of Ribosomal RNA large subunit methyltransferase E from Methanocella arvoryzae (strain DSM 22066 / NBRC 105507 / MRE50).